A 200-amino-acid polypeptide reads, in one-letter code: Large ribosomal subunit protein uL18 (200 aa).

It belongs to the universal ribosomal protein uL18 family. Part of the 50S ribosomal subunit. Contacts the 5S and 23S rRNAs.

This is one of the proteins that bind and probably mediate the attachment of the 5S RNA into the large ribosomal subunit, where it forms part of the central protuberance. The sequence is that of Large ribosomal subunit protein uL18 from Thermococcus sibiricus (strain DSM 12597 / MM 739).